Here is a 251-residue protein sequence, read N- to C-terminus: 2,3-bisphosphoglycerate-dependent phosphoglycerate mutase (251 aa).

Substrate contacts are provided by residues 11–18, 24–25, Arg63, 90–93, Lys101, 117–118, and 185–186; these read RHGNSDWN, TG, ERHY, RR, and GN. His12 functions as the Tele-phosphohistidine intermediate in the catalytic mechanism. Residue Glu90 is the Proton donor/acceptor of the active site.

It belongs to the phosphoglycerate mutase family. BPG-dependent PGAM subfamily.

It catalyses the reaction (2R)-2-phosphoglycerate = (2R)-3-phosphoglycerate. Its pathway is carbohydrate degradation; glycolysis; pyruvate from D-glyceraldehyde 3-phosphate: step 3/5. Catalyzes the interconversion of 2-phosphoglycerate and 3-phosphoglycerate. The protein is 2,3-bisphosphoglycerate-dependent phosphoglycerate mutase of Clavibacter sepedonicus (Clavibacter michiganensis subsp. sepedonicus).